The following is a 396-amino-acid chain: Ornithine aminotransferase (396 aa).

At Lys255 the chain carries N6-(pyridoxal phosphate)lysine.

Belongs to the class-III pyridoxal-phosphate-dependent aminotransferase family. OAT subfamily. Pyridoxal 5'-phosphate is required as a cofactor.

It is found in the cytoplasm. The enzyme catalyses a 2-oxocarboxylate + L-ornithine = L-glutamate 5-semialdehyde + an L-alpha-amino acid. It participates in amino-acid biosynthesis; L-proline biosynthesis; L-glutamate 5-semialdehyde from L-ornithine: step 1/1. In terms of biological role, catalyzes the interconversion of ornithine to glutamate semialdehyde. The polypeptide is Ornithine aminotransferase (Bacillus cereus (strain Q1)).